The sequence spans 466 residues: Glutamate decarboxylase beta (466 aa).

The substrate site is built by threonine 62 and asparagine 83. Pyridoxal 5'-phosphate-binding positions include 126 to 127 (SS), threonine 212, and histidine 275. Residue lysine 276 is modified to N6-(pyridoxal phosphate)lysine. An N6-acetyllysine mark is found at lysine 446, lysine 453, and lysine 464.

Belongs to the group II decarboxylase family. In terms of assembly, homohexamer composed of three dimers. The cofactor is pyridoxal 5'-phosphate.

It carries out the reaction L-glutamate + H(+) = 4-aminobutanoate + CO2. Functionally, converts glutamate to gamma-aminobutyrate (GABA), consuming one intracellular proton in the reaction. The gad system helps to maintain a near-neutral intracellular pH when cells are exposed to extremely acidic conditions. The ability to survive transit through the acidic conditions of the stomach is essential for successful colonization of the mammalian host by commensal and pathogenic bacteria. This Escherichia coli O6:H1 (strain CFT073 / ATCC 700928 / UPEC) protein is Glutamate decarboxylase beta (gadB).